We begin with the raw amino-acid sequence, 150 residues long: Cytochrome c-type biogenesis protein CcmE (150 aa).

Residues 1–7 (MTRKQKR) are Cytoplasmic-facing. Residues 8–28 (LAIIGGGVGFLTAAVLLVMFA) traverse the membrane as a helical; Signal-anchor for type II membrane protein segment. Topologically, residues 29 to 150 (FSQAVAYFYV…VTLGGKENIQ (122 aa)) are periplasmic. Positions 123 and 127 each coordinate heme.

The protein belongs to the CcmE/CycJ family.

The protein resides in the cell inner membrane. In terms of biological role, heme chaperone required for the biogenesis of c-type cytochromes. Transiently binds heme delivered by CcmC and transfers the heme to apo-cytochromes in a process facilitated by CcmF and CcmH. The sequence is that of Cytochrome c-type biogenesis protein CcmE from Sinorhizobium fredii (strain NBRC 101917 / NGR234).